The primary structure comprises 512 residues: Gustatory and odorant receptor 63a (512 aa).

The disordered stretch occupies residues 1–24 (MRPSGEKVVKGHGQGNSGHSLSGM). At 1-129 (MRPSGEKVVK…PARAKFEMNS (129 aa)) the chain is on the cytoplasmic side. The chain crosses the membrane as a helical span at residues 130-150 (ASFIYSVVFFVLLACYVGYVA). The Extracellular portion of the chain corresponds to 151-166 (NNRIHIVRSLSGPFEE). The chain crosses the membrane as a helical span at residues 167–187 (AVIAYLFLVNILPIMIIPILW). The Cytoplasmic segment spans residues 188-222 (YEARKIAKLFNDWDDFEVLYYQISGHSLPLKLRQK). A helical transmembrane segment spans residues 223–243 (AVYIAIVLPILSVLSVVITHV). At 244-265 (TMSDLNINQVVPYCILDNLTAM) the chain is on the extracellular side. Asparagine 261 carries an N-linked (GlcNAc...) asparagine glycan. A helical transmembrane segment spans residues 266-285 (LGAWWFLICEAMSITAHLLA). The Cytoplasmic portion of the chain corresponds to 286-324 (ERFQKALKHIGPAAMVADYRVLWLRLSKLTRDTGNALCY). The helical transmembrane segment at 325–345 (TFVFMSLYLFFIITLSIYGLM) threads the bilayer. At 346-350 (SQLSE) the chain is on the extracellular side. A helical transmembrane segment spans residues 351–371 (GFGIKDIGLTITALWNIGLLF). The Cytoplasmic portion of the chain corresponds to 372 to 436 (YICDEAHYAS…FFDVNRTLFK (65 aa)). The helical transmembrane segment at 437–457 (GLLTTMVTYLVVLLQFQISIP) threads the bilayer. The Extracellular segment spans residues 458 to 512 (TDKGDSEGANNITVVDFVMDSLDNDMSLMGASTLSTTTVGTTLPPPIMKLKGRKG). N-linked (GlcNAc...) asparagine glycosylation occurs at asparagine 468.

The protein belongs to the insect chemoreceptor superfamily. Gustatory receptor (GR) family. Gr21a subfamily. As to quaternary structure, gr21a and Gr63a probably form a heterodimer that responds to CO(2). In terms of tissue distribution, expressed in the medial aspect of the third antennal segment. Carbon dioxide-responsive neurons coexpress Gr21a and Gr63a in a pair of chemosensory receptors at both larval and adult life stages.

The protein localises to the cell membrane. Its function is as follows. Gustatory and odorant receptor which mediates acceptance or avoidance behavior, depending on its substrates. Gr21a and Gr63a together are sufficient for carbon dioxide detection and avoidance behavior. It is possible that the CO(2) receptors Gr63a and Gr21a activate the TRPC channels through Galpha49B and Plc21C. This innate olfactory avoidance behavior can be inhibited by inhibitory interactions of the odors such as 1-hexanol and 2,3-butanedione with Gr21a and Gr63a. This Drosophila melanogaster (Fruit fly) protein is Gustatory and odorant receptor 63a (Gr63a).